A 676-amino-acid chain; its full sequence is PAS domain-containing protein cky-1 (676 aa).

Residues 45 to 72 (SALNNNSINVPNNNTMGMSSAGSSNGSN) are compositionally biased toward low complexity. Residues 45-89 (SALNNNSINVPNNNTMGMSSAGSSNGSNLVNGQQRSTRGASKQRR) form a disordered region. Over residues 73–84 (LVNGQQRSTRGA) the composition is skewed to polar residues. Positions 76–89 (GQQRSTRGASKQRR) are basic motif. One can recognise a bHLH domain in the interval 76–129 (GQQRSTRGASKQRRDQINVEIQKLRDLLPLSDLIKDRLFQLQVMSLGCIFIRKH). The interval 90–129 (DQINVEIQKLRDLLPLSDLIKDRLFQLQVMSLGCIFIRKH) is helix-loop-helix motif. Residues 165–215 (MLMVTRSGKILHVSDNASEYLGHSVEEIMCQGDSIYDLVDGRDHGAVQAEL) enclose the PAS domain. The interval 436–462 (FSCQDSPPPSEEQQPSSPQTPPFTEQP) is disordered.

As to quaternary structure, heterodimer; efficient DNA binding requires dimerization with another bHLH protein. Forms a heterodimer with ARNT homolog aha-1; binds DNA as heterodimer.

The protein localises to the nucleus. Functionally, transcription factor. Efficient DNA binding requires dimerization with another bHLH protein, such as ARNT homolog aha-1. Regulates transcription of target genes, probably acting in complex with aha-1. This Caenorhabditis elegans protein is PAS domain-containing protein cky-1.